The sequence spans 487 residues: Beta-barrel assembly-enhancing protease (487 aa).

The N-terminal stretch at methionine 1–alanine 27 is a signal peptide. Histidine 136 provides a ligand contact to Zn(2+). Glutamate 137 is a catalytic residue. Zn(2+) is bound by residues histidine 140 and glutamate 201. Aspartate 205 serves as the catalytic Proton donor. TPR repeat units lie at residues histidine 309–asparagine 342 and aspartate 427–glycine 460.

Belongs to the peptidase M48 family. BepA subfamily. Zn(2+) is required as a cofactor.

It is found in the periplasm. Its function is as follows. Functions both as a chaperone and a metalloprotease. Maintains the integrity of the outer membrane by promoting either the assembly or the elimination of outer membrane proteins, depending on their folding state. The protein is Beta-barrel assembly-enhancing protease of Salmonella typhi.